The following is a 366-amino-acid chain: Melatonin receptor type 1A (366 aa).

The Extracellular segment spans residues 1–45; it reads MAGRLWGSPGGTPKGNGSSALLNVSQAAPGAGDGVRPRPSWLAAT. Asparagine 16 and asparagine 23 each carry an N-linked (GlcNAc...) asparagine glycan. The helical transmembrane segment at 46–66 threads the bilayer; the sequence is LASILIFTIVVDIVGNLLVVL. Over 67-79 the chain is Cytoplasmic; that stretch reads SVYRNKKLRNAGN. Residues 80–100 traverse the membrane as a helical segment; it reads VFVVSLAVADLLVAVYPYPLA. Topologically, residues 101–118 are extracellular; sequence LASIVNNGWSLSSLHCQL. A disulfide bond links cysteine 116 and cysteine 193. A helical membrane pass occupies residues 119–139; that stretch reads SGFLMGLSVIGSVFSITGIAI. Topologically, residues 140–158 are cytoplasmic; the sequence is NRYCCICHSLRYGKLYSGT. Residues 159–179 form a helical membrane-spanning segment; it reads NSLCYVFLIWTLTLVAIVPNL. The Extracellular portion of the chain corresponds to 180-203; that stretch reads CVGTLQYDPRIYSCTFTQSVSSAY. A helical membrane pass occupies residues 204–224; sequence TIAVVVFHFIVPMLVVVFCYL. Over 225–256 the chain is Cytoplasmic; that stretch reads RIWALVLQVRWKVKPDNKPKLKPQDFRNFVTM. Residues 257–277 traverse the membrane as a helical segment; it reads FVVFVLFAICWAPLNFIGLVV. Residues 278–290 lie on the Extracellular side of the membrane; that stretch reads ASDPASMAPRIPE. A helical membrane pass occupies residues 291 to 311; that stretch reads WLFVASYYMAYFNSCLNAIIY. At 312 to 366 the chain is on the cytoplasmic side; the sequence is GLLNQNFRQEYRKIIVSLCTTKMFFVDSSNHVADRIKRKPSPLIANHNLIKVDSV.

This sequence belongs to the G-protein coupled receptor 1 family.

It localises to the cell membrane. Functionally, high affinity receptor for melatonin. Likely to mediate the reproductive and circadian actions of melatonin. The activity of this receptor is mediated by pertussis toxin sensitive G proteins that inhibit adenylate cyclase activity. Possibly involved in sleep induction, by melatonin activation of the potassium channel KCNMA1/BK and the dissociation of G-beta and G-gamma subunits, thereby decreasing synaptic transmission. The polypeptide is Melatonin receptor type 1A (MTNR1A) (Ovis aries (Sheep)).